Reading from the N-terminus, the 211-residue chain is Large ribosomal subunit protein eL13 (211 aa).

This sequence belongs to the eukaryotic ribosomal protein eL13 family. In terms of assembly, component of the 60S large ribosomal subunit (LSU).

It is found in the cytoplasm. In terms of biological role, component of the ribosome, a large ribonucleoprotein complex responsible for the synthesis of proteins in the cell. The small ribosomal subunit (SSU) binds messenger RNAs (mRNAs) and translates the encoded message by selecting cognate aminoacyl-transfer RNA (tRNA) molecules. The large subunit (LSU) contains the ribosomal catalytic site termed the peptidyl transferase center (PTC), which catalyzes the formation of peptide bonds, thereby polymerizing the amino acids delivered by tRNAs into a polypeptide chain. The nascent polypeptides leave the ribosome through a tunnel in the LSU and interact with protein factors that function in enzymatic processing, targeting, and the membrane insertion of nascent chains at the exit of the ribosomal tunnel. As part of the LSU, it is probably required for its formation and the maturation of rRNAs. In Gallus gallus (Chicken), this protein is Large ribosomal subunit protein eL13 (RPL13).